The sequence spans 530 residues: Light-independent protochlorophyllide reductase subunit B (530 aa).

Asp36 contributes to the [4Fe-4S] cluster binding site. Catalysis depends on Asp287, which acts as the Proton donor. 422-423 serves as a coordination point for substrate; that stretch reads GL. Positions 453–472 are disordered; sequence PAVQTASSEPQPSAIETPSA. Over residues 454 to 463 the composition is skewed to polar residues; the sequence is AVQTASSEPQ.

It belongs to the ChlB/BchB/BchZ family. In terms of assembly, protochlorophyllide reductase is composed of three subunits; BchL, BchN and BchB. Forms a heterotetramer of two BchB and two BchN subunits. [4Fe-4S] cluster is required as a cofactor.

The catalysed reaction is chlorophyllide a + oxidized 2[4Fe-4S]-[ferredoxin] + 2 ADP + 2 phosphate = protochlorophyllide a + reduced 2[4Fe-4S]-[ferredoxin] + 2 ATP + 2 H2O. Its pathway is porphyrin-containing compound metabolism; bacteriochlorophyll biosynthesis (light-independent). In terms of biological role, component of the dark-operative protochlorophyllide reductase (DPOR) that uses Mg-ATP and reduced ferredoxin to reduce ring D of protochlorophyllide (Pchlide) to form chlorophyllide a (Chlide). This reaction is light-independent. The NB-protein (BchN-BchB) is the catalytic component of the complex. In Rhodopseudomonas palustris (strain BisB18), this protein is Light-independent protochlorophyllide reductase subunit B.